We begin with the raw amino-acid sequence, 282 residues long: Phosphate import ATP-binding protein PstB (282 aa).

Over residues 1 to 25 (MKALNANISTMSEVSRSATPQSDSP) the composition is skewed to polar residues. The segment at 1 to 26 (MKALNANISTMSEVSRSATPQSDSPA) is disordered. Positions 36–277 (IRIANFNAWY…PQEKRTDDYV (242 aa)) constitute an ABC transporter domain. 68 to 75 (GPSGCGKS) contacts ATP.

This sequence belongs to the ABC transporter superfamily. Phosphate importer (TC 3.A.1.7) family. The complex is composed of two ATP-binding proteins (PstB), two transmembrane proteins (PstC and PstA) and a solute-binding protein (PstS).

The protein localises to the cell inner membrane. It catalyses the reaction phosphate(out) + ATP + H2O = ADP + 2 phosphate(in) + H(+). In terms of biological role, part of the ABC transporter complex PstSACB involved in phosphate import. Responsible for energy coupling to the transport system. This Rhodopirellula baltica (strain DSM 10527 / NCIMB 13988 / SH1) protein is Phosphate import ATP-binding protein PstB.